The chain runs to 61 residues: Conotoxin Am14.1 (61 aa).

Propeptides lie at residues methionine 1–arginine 19 and lysine 52–glutamine 61.

Mostly non-hydroxylated. Post-translationally, contains 2 disulfide bonds. Expressed by the venom duct.

The protein resides in the secreted. Its function is as follows. Probable toxin that inhibits ion channels. This Conus amadis (Amadis cone) protein is Conotoxin Am14.1.